A 1278-amino-acid chain; its full sequence is Alpha-glucan water dikinase 2 (1278 aa).

The N-terminal stretch at 1 to 23 (MATSKSQQFQLIEGMELQITVTG) is a signal peptide. The active-site Tele-phosphohistidine intermediate is the His-886.

The protein belongs to the PEP-utilizing enzyme family. As to quaternary structure, homodimer. Requires Mg(2+) as cofactor.

The enzyme catalyses [(1-&gt;4)-alpha-D-glucosyl](n) + n ATP + n H2O = [(1-&gt;4)-6-phospho-alpha-D-glucosyl](n) + n AMP + n phosphate + 2n H(+). Functionally, mediates the incorporation of phosphate into alpha-glucan, mostly at the C-6 position of glucose units. This Arabidopsis thaliana (Mouse-ear cress) protein is Alpha-glucan water dikinase 2 (GWD2).